We begin with the raw amino-acid sequence, 139 residues long: Small ribosomal subunit protein uS11 (139 aa).

2 disordered regions span residues 1 to 33 and 118 to 139; these read MPPA…AAHI and GAIS…RRRV. Residues 14-23 show a composition bias toward basic residues; the sequence is KGQKTRRREK.

Belongs to the universal ribosomal protein uS11 family. As to quaternary structure, part of the 30S ribosomal subunit. Interacts with proteins S7 and S18. Binds to IF-3.

Located on the platform of the 30S subunit, it bridges several disparate RNA helices of the 16S rRNA. Forms part of the Shine-Dalgarno cleft in the 70S ribosome. The polypeptide is Small ribosomal subunit protein uS11 (Mycobacterium tuberculosis (strain ATCC 25177 / H37Ra)).